Here is a 208-residue protein sequence, read N- to C-terminus: Small ribosomal subunit protein uS2 (208 aa).

The segment at lysine 189–threonine 208 is disordered.

The protein belongs to the universal ribosomal protein uS2 family.

The chain is Small ribosomal subunit protein uS2 from Pyrobaculum arsenaticum (strain DSM 13514 / JCM 11321 / PZ6).